Here is a 98-residue protein sequence, read N- to C-terminus: Class II hydrophobin 5 (98 aa).

The signal sequence occupies residues 1–17; sequence MQFSLALVTLLATAVSA. 4 disulfide bridges follow: cysteine 30–cysteine 78, cysteine 39–cysteine 69, cysteine 40–cysteine 52, and cysteine 79–cysteine 90.

The protein belongs to the cerato-ulmin hydrophobin family.

The protein localises to the secreted. The protein resides in the cell wall. Its function is as follows. Aerial growth, conidiation, and dispersal of filamentous fungi in the environment rely upon a capability of their secreting small amphipathic proteins called hydrophobins (HPBs) with low sequence identity. Class I can self-assemble into an outermost layer of rodlet bundles on aerial cell surfaces, conferring cellular hydrophobicity that supports fungal growth, development and dispersal; whereas Class II form highly ordered films at water-air interfaces through intermolecular interactions but contribute nothing to the rodlet structure. Does not seem to be important for the ability to cause seedling disease. The polypeptide is Class II hydrophobin 5 (Gibberella moniliformis (Maize ear and stalk rot fungus)).